The primary structure comprises 141 residues: Large ribosomal subunit protein uL11c (141 aa).

This sequence belongs to the universal ribosomal protein uL11 family. Part of the ribosomal stalk of the 50S ribosomal subunit. Interacts with L10 and the large rRNA to form the base of the stalk. L10 forms an elongated spine to which L12 dimers bind in a sequential fashion forming a multimeric L10(L12)X complex.

It is found in the plastid. The protein localises to the chloroplast. In terms of biological role, forms part of the ribosomal stalk which helps the ribosome interact with GTP-bound translation factors. The protein is Large ribosomal subunit protein uL11c of Pyropia yezoensis (Susabi-nori).